A 124-amino-acid chain; its full sequence is ATP synthase epsilon chain (124 aa).

This sequence belongs to the ATPase epsilon chain family. F-type ATPases have 2 components, CF(1) - the catalytic core - and CF(0) - the membrane proton channel. CF(1) has five subunits: alpha(3), beta(3), gamma(1), delta(1), epsilon(1). CF(0) has three main subunits: a, b and c.

The protein resides in the cell membrane. Produces ATP from ADP in the presence of a proton gradient across the membrane. This chain is ATP synthase epsilon chain, found in Corynebacterium glutamicum (strain ATCC 13032 / DSM 20300 / JCM 1318 / BCRC 11384 / CCUG 27702 / LMG 3730 / NBRC 12168 / NCIMB 10025 / NRRL B-2784 / 534).